We begin with the raw amino-acid sequence, 567 residues long: Thiol:disulfide interchange protein DsbD (567 aa).

The signal sequence occupies residues 1 to 19 (MAQRIFTLILLLCSTSAFA). 2 cysteine pairs are disulfide-bonded: C122/C128 and C185/C307. 8 helical membrane-spanning segments follow: residues 166-186 (LPFSALWALLIGIGIAFTPCV), 211-231 (LLAFIYVQGMALTYTALGLVV), 246-266 (YVLIGLAIVFTLLALSMFGLF), 299-319 (IAGLICSPCTTAPLSAILLYI), 326-346 (WLGGGTLYLYALGMGLPLMLV), 360-380 (WMAHVKTAFGFVILALPVFLL), 387-407 (AWGLRLWSLLGVAFFGWAFIT), and 418-438 (IVQIILLAAALISVRPLQDWA). The Thioredoxin domain maps to 435-567 (QDWAFGSPSA…FSAHLHDRQP (133 aa)). A disulfide bridge links C482 with C485.

This sequence belongs to the thioredoxin family. DsbD subfamily.

The protein resides in the cell inner membrane. It catalyses the reaction [protein]-dithiol + NAD(+) = [protein]-disulfide + NADH + H(+). The enzyme catalyses [protein]-dithiol + NADP(+) = [protein]-disulfide + NADPH + H(+). Required to facilitate the formation of correct disulfide bonds in some periplasmic proteins and for the assembly of the periplasmic c-type cytochromes. Acts by transferring electrons from cytoplasmic thioredoxin to the periplasm. This transfer involves a cascade of disulfide bond formation and reduction steps. The chain is Thiol:disulfide interchange protein DsbD from Salmonella paratyphi A (strain ATCC 9150 / SARB42).